We begin with the raw amino-acid sequence, 3564 residues long: Sushi, von Willebrand factor type A, EGF and pentraxin domain-containing protein 1 (3564 aa).

The N-terminal stretch at 1–17 (MWTRLAFCCWALALVSG) is a signal peptide. One can recognise a VWFA domain in the interval 84-265 (ELVFLVDESS…LARRALHEDL (182 aa)). N-linked (GlcNAc...) asparagine glycosylation occurs at asparagine 187. Sushi domains are found at residues 377-436 (VHCP…FCRV), 437-496 (RTCP…RCVE), and 497-561 (RHCA…VCKD). Intrachain disulfides connect cysteine 379/cysteine 421, cysteine 407/cysteine 434, cysteine 439/cysteine 481, cysteine 467/cysteine 494, cysteine 499/cysteine 544, and cysteine 530/cysteine 559. HYR domains follow at residues 560 to 644 (KDVE…KVID) and 645 to 724 (VEPP…VIKG). The Sushi 4 domain maps to 725–789 (SPCEVPFTPV…YSTEWPDCAI (65 aa)). Cystine bridges form between cysteine 727–cysteine 769, cysteine 753–cysteine 787, cysteine 1192–cysteine 1203, cysteine 1197–cysteine 1212, cysteine 1214–cysteine 1223, cysteine 1230–cysteine 1241, cysteine 1235–cysteine 1250, cysteine 1252–cysteine 1261, cysteine 1268–cysteine 1279, cysteine 1273–cysteine 1288, cysteine 1290–cysteine 1299, cysteine 1306–cysteine 1317, cysteine 1311–cysteine 1326, cysteine 1328–cysteine 1337, cysteine 1344–cysteine 1355, cysteine 1349–cysteine 1364, cysteine 1366–cysteine 1375, cysteine 1382–cysteine 1393, cysteine 1387–cysteine 1402, and cysteine 1404–cysteine 1413. Residues 1188-1224 (VFHECFLNPCHNSGTCQQLGRGYVCLCPPGYTGLKCE) enclose the EGF-like 1 domain. The 37-residue stretch at 1226–1262 (DIDECSSLPCLNGGICRDKVGGFTCECSSGYTGQICE) folds into the EGF-like 2; calcium-binding domain. In terms of domain architecture, EGF-like 3; calcium-binding spans 1264-1300 (NINECSSSPCLNKGTCTDGLASYRCTCVSGYVGVHCE). The EGF-like 4; calcium-binding domain maps to 1302–1338 (DVNECQSSPCLNNAVCKDQVGGFSCKCPPGFLGTRCE). The 37-residue stretch at 1340–1376 (NVDECLSQPCQNGATCKDGANSFRCQCPAGFTGPHCE) folds into the EGF-like 5; calcium-binding domain. Residues 1378 to 1414 (NINECQSNPCRNQATCVDELNSYSCKCRPGFSGRRCE) enclose the EGF-like 6; calcium-binding domain. The 205-residue stretch at 1419–1623 (SGFNLDFEVS…VKVDSSSIFC (205 aa)) folds into the Pentraxin (PTX) domain. 2 Sushi domains span residues 1624 to 1682 (SDCP…HCER) and 1683 to 1740 (IRCG…SCLD). 35 cysteine pairs are disulfide-bonded: cysteine 1626–cysteine 1667, cysteine 1653–cysteine 1680, cysteine 1685–cysteine 1725, cysteine 1711–cysteine 1738, cysteine 1744–cysteine 1756, cysteine 1750–cysteine 1765, cysteine 1767–cysteine 1778, cysteine 1784–cysteine 1824, cysteine 1810–cysteine 1837, cysteine 1842–cysteine 1882, cysteine 1868–cysteine 1895, cysteine 1900–cysteine 1940, cysteine 1926–cysteine 1953, cysteine 1958–cysteine 1998, cysteine 1984–cysteine 2011, cysteine 2016–cysteine 2056, cysteine 2042–cysteine 2073, cysteine 2078–cysteine 2121, cysteine 2107–cysteine 2136, cysteine 2141–cysteine 2181, cysteine 2167–cysteine 2194, cysteine 2199–cysteine 2240, cysteine 2226–cysteine 2254, cysteine 2259–cysteine 2299, cysteine 2285–cysteine 2313, cysteine 2318–cysteine 2358, cysteine 2344–cysteine 2371, cysteine 2376–cysteine 2417, cysteine 2403–cysteine 2430, cysteine 2435–cysteine 2475, cysteine 2461–cysteine 2488, cysteine 2493–cysteine 2533, cysteine 2519–cysteine 2546, cysteine 2551–cysteine 2591, and cysteine 2577–cysteine 2603. Positions 1740–1779 (DVDECAVGSDCSEHASCLNTNGSYICSCKPPYTGDGKNCA) constitute an EGF-like 7; calcium-binding domain. N-linked (GlcNAc...) asparagine glycosylation is present at asparagine 1760. 14 consecutive Sushi domains span residues 1776–1839 (KNCA…SCEA), 1840–1897 (ISCG…VCEL), 1898–1955 (VKCS…SCQL), 1956–2013 (VSCG…QCLA), 2014–2075 (VSCD…RCIA), 2076–2138 (HFCE…QCIP), 2139–2196 (VRCG…TCHP), 2197–2256 (VSCN…SCTP), 2257–2315 (LNCG…KCVP), 2316–2373 (TKCA…VCKL), 2374–2432 (VLCQ…ECVP), 2433–2490 (VECP…MCRP), 2491–2548 (IECP…SCNA), and 2549–2605 (IHCS…TCVP). The tract at residues 2634–2641 (DMMEVPYL) is important for the interaction with integrin ITGA9:ITGB1. Sushi domains lie at 2659 to 2708 (EESL…SCIS), 2709 to 2766 (IECD…RCEV), 2767 to 2824 (ISCS…VCLP), 2825 to 2882 (VDCG…SCVP), 2883 to 2940 (VRCP…ICKP), 2941 to 2998 (ATCG…SCLP), 2999 to 3054 (CTCS…LCEH), 3055 to 3112 (ADCG…TCEP), 3113 to 3171 (VSCG…NCSP), 3172 to 3231 (KTCP…SCIP), 3232 to 3289 (VVCG…VCRE), 3290 to 3347 (SRCE…LCKP), 3348 to 3406 (NPCP…RCEK), and 3407 to 3463 (ISCG…ICRA). 33 disulfide bridges follow: cysteine 2679–cysteine 2706, cysteine 2711–cysteine 2751, cysteine 2737–cysteine 2764, cysteine 2769–cysteine 2809, cysteine 2795–cysteine 2822, cysteine 2827–cysteine 2867, cysteine 2853–cysteine 2880, cysteine 2885–cysteine 2925, cysteine 2911–cysteine 2938, cysteine 2943–cysteine 2983, cysteine 2969–cysteine 2996, cysteine 3001–cysteine 3040, cysteine 3026–cysteine 3052, cysteine 3057–cysteine 3097, cysteine 3083–cysteine 3110, cysteine 3115–cysteine 3156, cysteine 3141–cysteine 3169, cysteine 3174–cysteine 3214, cysteine 3200–cysteine 3229, cysteine 3234–cysteine 3274, cysteine 3260–cysteine 3287, cysteine 3292–cysteine 3332, cysteine 3318–cysteine 3345, cysteine 3350–cysteine 3391, cysteine 3377–cysteine 3404, cysteine 3409–cysteine 3449, cysteine 3435–cysteine 3461, cysteine 3497–cysteine 3507, cysteine 3501–cysteine 3513, cysteine 3515–cysteine 3524, cysteine 3529–cysteine 3539, cysteine 3533–cysteine 3545, and cysteine 3547–cysteine 3556. 2 consecutive EGF-like domains span residues 3493–3525 (EEPI…SRCH) and 3526–3557 (TATC…HDCS).

In terms of assembly, interacts (via Sushi domain 21) with ITGA9:ITGB1; thereby inhibits Ca(2+) intracellular signaling and as a result represses vasocontraction. Interacts (via Sushi domain 21) with ITGA4:ITGB1; thereby inhibits Ca(2+) intracellular signaling and as a result represses vasocontraction. Interacts with ANGPT1 and ANGPT2. Interacts with PEAR1 (via extracellular domain). Interacts with HSPG2, TLN1, FN1, COPA, CCT2, IQGAP1, LAMC1 and NID1. Interacts (via C-terminus) with TIE1.

Its subcellular location is the secreted. It localises to the nucleus. It is found in the cytoplasm. The protein resides in the membrane. In terms of biological role, required for morphological development, cell alignment and migration of lymphatic endothelial cells during embryonic development, potentially via modulation of ANGPT2-TIE1 signaling and subsequent activation of FOXC2 transcription. Required for embryonic lymphatic vascular development, via mediating the correct formation of the first lymphovenous contact site and tight association of the lymphatic endothelium with the venous endothelium. Represses PRKCA-mediated L-type voltage-gated channel Ca(2+) influx and ROCK-mediated calcium sensitivity in vascular smooth muscle cells, via its interaction with integrins, thereby inhibiting vasocontraction. Promotes platelet activation, via its interaction with PEAR1 and subsequent activation of AKT/mTOR signaling. Plays a role in epidermal development and keratinocyte differentiation, independent of cell-cell adhesion. May play a role in initial cell attachment of stromal osteogenic cells. May promote myoblast cell adhesion when in the presence of integrin ITGA9:ITGB1. The polypeptide is Sushi, von Willebrand factor type A, EGF and pentraxin domain-containing protein 1 (Svep1) (Rattus norvegicus (Rat)).